A 429-amino-acid chain; its full sequence is Probable M18 family aminopeptidase 2 (429 aa).

His-82, His-156, and His-401 together coordinate Zn(2+).

The protein belongs to the peptidase M18 family. Zn(2+) is required as a cofactor.

The sequence is that of Probable M18 family aminopeptidase 2 from Pseudomonas fluorescens (strain Pf0-1).